Reading from the N-terminus, the 260-residue chain is Acetyl-coenzyme A carboxylase carboxyl transferase subunit alpha (260 aa).

The CoA carboxyltransferase C-terminal domain occupies 1 to 235 (MSAYDKVMAA…SNKILHSINK (235 aa)).

Belongs to the AccA family. In terms of assembly, acetyl-CoA carboxylase is a heterohexamer composed of biotin carboxyl carrier protein (AccB), biotin carboxylase (AccC) and two subunits each of ACCase subunit alpha (AccA) and ACCase subunit beta (AccD).

Its subcellular location is the cytoplasm. The enzyme catalyses N(6)-carboxybiotinyl-L-lysyl-[protein] + acetyl-CoA = N(6)-biotinyl-L-lysyl-[protein] + malonyl-CoA. Its pathway is lipid metabolism; malonyl-CoA biosynthesis; malonyl-CoA from acetyl-CoA: step 1/1. Functionally, component of the acetyl coenzyme A carboxylase (ACC) complex. First, biotin carboxylase catalyzes the carboxylation of biotin on its carrier protein (BCCP) and then the CO(2) group is transferred by the carboxyltransferase to acetyl-CoA to form malonyl-CoA. The protein is Acetyl-coenzyme A carboxylase carboxyl transferase subunit alpha of Ruminiclostridium cellulolyticum (strain ATCC 35319 / DSM 5812 / JCM 6584 / H10) (Clostridium cellulolyticum).